We begin with the raw amino-acid sequence, 85 residues long: Conotoxin Mi15a (85 aa).

Residues 1–23 (MEKLTVLILVATVLLTIQVLGQS) form the signal peptide. Positions 24–49 (DRDKHLKRRPKQYATKRLSARMRGHR) are excised as a propeptide. Glutamine 50 is subject to Pyrrolidone carboxylic acid.

Belongs to the conotoxin O2 superfamily. Post-translationally, contains 4 disulfide bonds. As to expression, expressed by the venom duct.

It is found in the secreted. In Conus miles (Soldier cone), this protein is Conotoxin Mi15a.